Consider the following 288-residue polypeptide: tRNA pseudouridine synthase B (288 aa).

Residue Asp38 is the Nucleophile of the active site.

Belongs to the pseudouridine synthase TruB family. Type 1 subfamily.

The catalysed reaction is uridine(55) in tRNA = pseudouridine(55) in tRNA. Its function is as follows. Responsible for synthesis of pseudouridine from uracil-55 in the psi GC loop of transfer RNAs. The polypeptide is tRNA pseudouridine synthase B (Carboxydothermus hydrogenoformans (strain ATCC BAA-161 / DSM 6008 / Z-2901)).